The following is a 959-amino-acid chain: Protein NLP7 (959 aa).

The segment at 1–22 (MCEPDDNSARNGVTTQPSRSRE) is disordered. Polar residues predominate over residues 9–18 (ARNGVTTQPS). One can recognise an RWP-RK domain in the interval 578–659 (KKKTEKKRGK…IESVQGTDGG (82 aa)). A coiled-coil region spans residues 633-654 (SRKIKKVNRSITKLKRVIESVQ). Composition is skewed to polar residues over residues 673-687 (THGQ…SPNG), 694-703 (PNTNNSPNHW), and 735-745 (GTPTSHGSCDG). A disordered region spans residues 673-760 (THGQTSAQPL…PKVPNQDPLF (88 aa)). The region spanning 863–945 (TVTIKASYKD…KIVRLLVHDV (83 aa)) is the PB1 domain.

Interacts with NRG2. In terms of tissue distribution, expressed in roots, stems, leaves, flowers and siliques. Detected in root hairs, emerging secondary roots, vascular tissues, leaf parenchyma cells and stomata.

It is found in the nucleus. Functionally, transcription factor involved in regulation of nitrate assimilation and in transduction of the nitrate signal. The sequence is that of Protein NLP7 (NLP7) from Arabidopsis thaliana (Mouse-ear cress).